The following is a 246-amino-acid chain: Putative outer membrane protein YiaT (246 aa).

Residues 1 to 21 (MLINRNIVALFALPFMASATA) form the signal peptide.

It belongs to the MipA/OmpV family.

It is found in the cell outer membrane. The chain is Putative outer membrane protein YiaT (yiaT) from Escherichia coli O157:H7.